The following is a 163-amino-acid chain: CASP-like protein 1C3 (163 aa).

Over 1–6 (MAKIKK) the chain is Cytoplasmic. The helical transmembrane segment at 7-27 (IFTNFLRLLALAATVVAIVFM) threads the bilayer. The Extracellular portion of the chain corresponds to 28–52 (VTSHDSAQVLNLTFTVKYSNTPVFK). N38 carries N-linked (GlcNAc...) asparagine glycosylation. A helical transmembrane segment spans residues 53–73 (YFVIAEAIAGGYIVISILLSF). At 74–79 (KSLFWR) the chain is on the cytoplasmic side. Residues 80 to 100 (LLVILDMVTAVLLTSSISAAL) traverse the membrane as a helical segment. At 101 to 128 (AIAQVGKKGNTHAGWLPVCEQVPDFCDQ) the chain is on the extracellular side. Residues 129 to 149 (VTIALIAGFAAAIIYFVLLLC) form a helical membrane-spanning segment. The Cytoplasmic portion of the chain corresponds to 150–163 (SLYVVLSPIFVVTP).

The protein belongs to the Casparian strip membrane proteins (CASP) family. As to quaternary structure, homodimer and heterodimers.

The protein localises to the cell membrane. This Populus trichocarpa (Western balsam poplar) protein is CASP-like protein 1C3.